The primary structure comprises 432 residues: Adenylosuccinate synthetase (432 aa).

GTP is bound by residues 13–19 and 41–43; these read GDEGKGK and GHT. Residue Asp-14 is the Proton acceptor of the active site. 2 residues coordinate Mg(2+): Asp-14 and Gly-41. IMP-binding positions include 14–17, 39–42, Thr-130, Arg-144, Gln-225, Thr-240, and Arg-304; these read DEGK and NAGH. Catalysis depends on His-42, which acts as the Proton donor. 300-306 contributes to the substrate binding site; that stretch reads ATTGRKR. GTP contacts are provided by residues Arg-306, 332-334, and 415-417; these read KLD and STG.

This sequence belongs to the adenylosuccinate synthetase family. Homodimer. The cofactor is Mg(2+).

Its subcellular location is the cytoplasm. It catalyses the reaction IMP + L-aspartate + GTP = N(6)-(1,2-dicarboxyethyl)-AMP + GDP + phosphate + 2 H(+). It functions in the pathway purine metabolism; AMP biosynthesis via de novo pathway; AMP from IMP: step 1/2. Plays an important role in the de novo pathway of purine nucleotide biosynthesis. Catalyzes the first committed step in the biosynthesis of AMP from IMP. The polypeptide is Adenylosuccinate synthetase (Vibrio cholerae serotype O1 (strain M66-2)).